The chain runs to 308 residues: Elongation factor Ts (308 aa).

Residues Thr-80–Val-83 form an involved in Mg(2+) ion dislocation from EF-Tu region.

It belongs to the EF-Ts family.

It localises to the cytoplasm. In terms of biological role, associates with the EF-Tu.GDP complex and induces the exchange of GDP to GTP. It remains bound to the aminoacyl-tRNA.EF-Tu.GTP complex up to the GTP hydrolysis stage on the ribosome. The chain is Elongation factor Ts from Agrobacterium fabrum (strain C58 / ATCC 33970) (Agrobacterium tumefaciens (strain C58)).